The following is a 262-amino-acid chain: Nurim (262 aa).

The Nuclear portion of the chain corresponds to 1 to 4 (MAPA). Residues 5–28 (LLLVPAALASFILAFGTGVEFVRF) form a helical membrane-spanning segment. Over 29–58 (TSLRPLLGGIPESGGPDARHGWLAALQDRS) the chain is Perinuclear space. Residues 59 to 80 (ILASLAWDLCLLLLFVVQHSLM) traverse the membrane as a helical segment. The Nuclear portion of the chain corresponds to 81-97 (ATEAVKAWTSRYFGVLQ). Residues 98-114 (RSLYVACTALALQLVMR) traverse the membrane as a helical segment. The Perinuclear space portion of the chain corresponds to 115 to 133 (YWETTPRGPVLWEARAEPW). A helical transmembrane segment spans residues 134–164 (ATWVPLLCFVLHVVSWLLIFSILLVFDYAEL). Over 165-191 (MGLKQVYYHVLGLGEPLSLKSPRALRL) the chain is Nuclear. The chain crosses the membrane as a helical span at residues 192–210 (FSHLRHPVCVELLTVLWVV). Over 211-216 (PTLGTD) the chain is Perinuclear space. The helical transmembrane segment at 217 to 234 (RLLLALLFTLYLGLAHGL) threads the bilayer. Residues 235–262 (DQQDLRYLRSQLQRKLHLLSRPQDGEAE) lie on the Nuclear side of the membrane.

The protein belongs to the nurim family.

The protein resides in the nucleus inner membrane. This is Nurim (Nrm) from Mus musculus (Mouse).